The chain runs to 276 residues: Krueppel homolog 2 (276 aa).

Residues 1-37 (MSAPTDQPPRSEGAQTNSSERSSQQQEQPQQSQSQNV) are disordered. Residues 18 to 35 (SSERSSQQQEQPQQSQSQ) are compositionally biased toward low complexity. Ser22 bears the Phosphoserine mark. Transmembrane regions (helical) follow at residues 53–73 (ALWA…LPIF), 125–145 (LIFF…LYSV), and 181–201 (ILKA…VLAF).

This sequence belongs to the PER33/POM33 family.

It localises to the membrane. In terms of biological role, member of the dosage-dependent hierarchy effective upon white gene expression. The sequence is that of Krueppel homolog 2 (Kr-h2) from Drosophila melanogaster (Fruit fly).